The chain runs to 507 residues: 3-[(3aS,4S,7aS)-7a-methyl-1,5-dioxo-octahydro-1H-inden-4-yl]propanoyl:CoA ligase (507 aa).

ATP-binding positions include Thr177 to Lys185, Asp391, Arg406, and Lys497.

It belongs to the ATP-dependent AMP-binding enzyme family.

It catalyses the reaction 3-[(3aS,4S,7aS)-7a-methyl-1,5-dioxo-octahydro-1H-inden-4-yl]propanoate + ATP + CoA = 3-[(3aS,4S,7aS)-7a-methyl-1,5-dioxo-octahydro-1H-inden-4-yl]propanoyl-CoA + AMP + diphosphate. The catalysed reaction is 5-hydroxy-3-[(3aS,4S,5R,7aS)-7a-methyl-1,5-dioxo-octahydro-1H-inden-4-yl]propanoate + ATP + CoA = 3-[(3aS,4S,5R,7aS)-5-hydroxy-7a-methyl-1-oxo-octahydro-1H-inden-4-yl]propanoyl-CoA + AMP + diphosphate. In terms of biological role, involved in the catabolism of the rings C and D of cholesterol. Catalyzes the ATP-dependent CoA thioesterification of 3aalpha-H-4alpha(3'-propanoate)-7abeta-methylhexahydro-1,5-indanedione (HIP) to yield HIP-CoA. It can also use the hydroxylated analogs of HIP, 5alpha-OH HIP and 1beta-OH HIP. It requires that the side chain at C17 is completely removed. This chain is 3-[(3aS,4S,7aS)-7a-methyl-1,5-dioxo-octahydro-1H-inden-4-yl]propanoyl:CoA ligase, found in Mycobacterium tuberculosis (strain ATCC 25618 / H37Rv).